The chain runs to 540 residues: uncharacterized protein (540 aa).

An N-terminal signal peptide occupies residues methionine 1–serine 20.

This sequence belongs to the TP096X family.

This is an uncharacterized protein from Treponema pallidum (strain Nichols).